A 407-amino-acid polypeptide reads, in one-letter code: MPVNLVAPDPASLLPVPGVRLGIASAGIKKAGRRDLTLIELAPGSRVAGVFTQNRFCAAPVTVCREHLTRGDVRALVINTGNANAGTGDEGLDRARRTCSAVADLFAVDATQVLPFSTGVILEPLPIDKILPALPAAHADLAAGHWSEAAAAIMTTDIVAKGASRQLQIDGRTITVTGIAKGSGMIHPNMATMLGFVATDAAIAPALMQRMVRDVADVSFNCVTVDGDTSTNDSFILIATGQAGNAEIADAGTDYSALKAALADVAIELAQAMARDGEGATKFMTIAVEGGRDRAECKQIAYAIARSPLVKTAFFASDPNLGRILAAIGYAGVQDLDVNALKVWLGDVLVAEAGGRAAGYSEAAAAAVMKAAEITVRVSLARGDARATVWTCDFSYDYVKINAEYRT.

Substrate-binding residues include threonine 155, lysine 181, threonine 192, glutamate 278, asparagine 402, and threonine 407. Threonine 192 (nucleophile) is an active-site residue.

This sequence belongs to the ArgJ family. In terms of assembly, heterotetramer of two alpha and two beta chains.

It is found in the cytoplasm. The enzyme catalyses N(2)-acetyl-L-ornithine + L-glutamate = N-acetyl-L-glutamate + L-ornithine. It catalyses the reaction L-glutamate + acetyl-CoA = N-acetyl-L-glutamate + CoA + H(+). Its pathway is amino-acid biosynthesis; L-arginine biosynthesis; L-ornithine and N-acetyl-L-glutamate from L-glutamate and N(2)-acetyl-L-ornithine (cyclic): step 1/1. It participates in amino-acid biosynthesis; L-arginine biosynthesis; N(2)-acetyl-L-ornithine from L-glutamate: step 1/4. Catalyzes two activities which are involved in the cyclic version of arginine biosynthesis: the synthesis of N-acetylglutamate from glutamate and acetyl-CoA as the acetyl donor, and of ornithine by transacetylation between N(2)-acetylornithine and glutamate. This chain is Arginine biosynthesis bifunctional protein ArgJ, found in Thiobacillus denitrificans (strain ATCC 25259 / T1).